Consider the following 154-residue polypeptide: UPF0225 protein Spro_2712 (154 aa).

This sequence belongs to the UPF0225 family.

This Serratia proteamaculans (strain 568) protein is UPF0225 protein Spro_2712.